A 369-amino-acid chain; its full sequence is Biotin synthase (369 aa).

The region spanning 51 to 269 (NYVQVSTLLS…IAVARIMMPK (219 aa)) is the Radical SAM core domain. Residues Cys66, Cys70, and Cys73 each coordinate [4Fe-4S] cluster. [2Fe-2S] cluster is bound by residues Cys110, Cys141, Cys201, and Arg273.

Belongs to the radical SAM superfamily. Biotin synthase family. As to quaternary structure, homodimer. [4Fe-4S] cluster serves as cofactor. The cofactor is [2Fe-2S] cluster.

The enzyme catalyses (4R,5S)-dethiobiotin + (sulfur carrier)-SH + 2 reduced [2Fe-2S]-[ferredoxin] + 2 S-adenosyl-L-methionine = (sulfur carrier)-H + biotin + 2 5'-deoxyadenosine + 2 L-methionine + 2 oxidized [2Fe-2S]-[ferredoxin]. The protein operates within cofactor biosynthesis; biotin biosynthesis; biotin from 7,8-diaminononanoate: step 2/2. Functionally, catalyzes the conversion of dethiobiotin (DTB) to biotin by the insertion of a sulfur atom into dethiobiotin via a radical-based mechanism. This chain is Biotin synthase, found in Pseudoalteromonas atlantica (strain T6c / ATCC BAA-1087).